A 197-amino-acid polypeptide reads, in one-letter code: MEKALILITAYLLGSIPFALLVGKIGYGIDIREHGSGNLGGTNTFRVLGVKAGMIVTCGDMLKGTLAASLPVLFSVHIHPLLAGVCAVIGHTYPIFAKFRGGKAVATSAGVMLFYSPFLFVSLLTVFFIVLYISKYVSLSSMLAGVYAVIYTIFFTDDIPLMIAVSLLTAFIFYRHRANIKRIVNKTEPKIKWLGRK.

Transmembrane regions (helical) follow at residues 5-25, 70-90, 111-131, and 153-173; these read LILITAYLLGSIPFALLVGKI, LPVLFSVHIHPLLAGVCAVIG, VMLFYSPFLFVSLLTVFFIVL, and IFFTDDIPLMIAVSLLTAFIF.

The protein belongs to the PlsY family. In terms of assembly, probably interacts with PlsX.

It localises to the cell membrane. The enzyme catalyses an acyl phosphate + sn-glycerol 3-phosphate = a 1-acyl-sn-glycero-3-phosphate + phosphate. It participates in lipid metabolism; phospholipid metabolism. Catalyzes the transfer of an acyl group from acyl-phosphate (acyl-PO(4)) to glycerol-3-phosphate (G3P) to form lysophosphatidic acid (LPA). This enzyme utilizes acyl-phosphate as fatty acyl donor, but not acyl-CoA or acyl-ACP. In Geobacillus sp. (strain WCH70), this protein is Glycerol-3-phosphate acyltransferase.